Consider the following 407-residue polypeptide: Lysosome-associated membrane glycoprotein 1 (407 aa).

The first 21 residues, 1–21, serve as a signal peptide directing secretion; the sequence is MAAPGARRPLLLLLLAGLAHS. A first lumenal domain region spans residues 22-189; that stretch reads APALFEVKDN…SKEETRCPQD (168 aa). At 22-371 the chain is on the lumenal side; sequence APALFEVKDN…VEECVQDGNN (350 aa). N-linked (GlcNAc...) asparagine glycosylation is found at asparagine 32, asparagine 59, asparagine 71, asparagine 79, asparagine 102, asparagine 116, asparagine 125, asparagine 145, asparagine 160, and asparagine 178. Residues cysteine 36 and cysteine 75 are joined by a disulfide bond. A disulfide bond links cysteine 150 and cysteine 186. The disordered stretch occupies residues 180-211; sequence SKEETRCPQDQPSPTTGPPSPSPPLVPTNPSV. The tract at residues 190–219 is hinge; sequence QPSPTTGPPSPSPPLVPTNPSVSKYNVTGD. The span at 194 to 206 shows a compositional bias: pro residues; it reads TTGPPSPSPPLVP. Residues asparagine 215, asparagine 220, asparagine 233, asparagine 241, asparagine 271, asparagine 283, asparagine 297, and asparagine 312 are each glycosylated (N-linked (GlcNAc...) asparagine). A second lumenal domain region spans residues 220 to 371; that stretch reads NGTCLLASMA…VEECVQDGNN (152 aa). Cysteine 223 and cysteine 260 are joined by a disulfide. A disulfide bridge connects residues cysteine 328 and cysteine 365. The helical transmembrane segment at 372-395 threads the bilayer; the sequence is MLIPIAVGGALAGLVLIVLIAYLI. At 396–407 the chain is on the cytoplasmic side; the sequence is GRKRSHAGYQTI.

The protein belongs to the LAMP family. As to quaternary structure, interacts with ABCB9; this interaction strongly stabilizes ABCB9 and protects ABCB9 against lysosomal degradation. Interacts with FURIN. Interacts with TMEM175; inhibiting the proton channel activity of TMEM175. In terms of processing, O- and N-glycosylated; some of the N-glycans attached to LAMP-1 are polylactosaminoglycans.

Its subcellular location is the lysosome membrane. It is found in the endosome membrane. The protein resides in the late endosome membrane. The protein localises to the cell membrane. It localises to the cytolytic granule membrane. Functionally, lysosomal membrane glycoprotein which plays an important role in lysosome biogenesis, lysosomal pH regulation, autophagy and cholesterol homeostasis. Acts as an important regulator of lysosomal lumen pH regulation by acting as a direct inhibitor of the proton channel TMEM175, facilitating lysosomal acidification for optimal hydrolase activity. Also plays an important role in NK-cells cytotoxicity. Mechanistically, participates in cytotoxic granule movement to the cell surface and perforin trafficking to the lytic granule. In addition, protects NK-cells from degranulation-associated damage induced by their own cytotoxic granule content. Presents carbohydrate ligands to selectins. This is Lysosome-associated membrane glycoprotein 1 (Lamp1) from Rattus norvegicus (Rat).